A 430-amino-acid polypeptide reads, in one-letter code: Adenylosuccinate synthetase (430 aa).

GTP-binding positions include 12 to 18 and 40 to 42; these read GDEGKGK and GHT. Asp13 acts as the Proton acceptor in catalysis. Residues Asp13 and Gly40 each contribute to the Mg(2+) site. IMP-binding positions include 13-16, 38-41, Thr128, Arg142, Gln223, Thr238, and Arg302; these read DEGK and NAGH. The active-site Proton donor is the His41. Substrate is bound at residue 298-304; it reads TTTGRPR. GTP-binding positions include Arg304, 330 to 332, and 413 to 415; these read SID and SVG.

Belongs to the adenylosuccinate synthetase family. In terms of assembly, homodimer. Requires Mg(2+) as cofactor.

The protein resides in the cytoplasm. It catalyses the reaction IMP + L-aspartate + GTP = N(6)-(1,2-dicarboxyethyl)-AMP + GDP + phosphate + 2 H(+). It functions in the pathway purine metabolism; AMP biosynthesis via de novo pathway; AMP from IMP: step 1/2. Plays an important role in the de novo pathway of purine nucleotide biosynthesis. Catalyzes the first committed step in the biosynthesis of AMP from IMP. This chain is Adenylosuccinate synthetase, found in Lactococcus lactis subsp. lactis (strain IL1403) (Streptococcus lactis).